Reading from the N-terminus, the 397-residue chain is Probable protein phosphatase 2C 74 (397 aa).

The 259-residue stretch at 133–391 (GFWVASRRGL…DDVTVMVVDL (259 aa)) folds into the PPM-type phosphatase domain. Residues aspartate 170, glycine 171, aspartate 343, and aspartate 382 each contribute to the Mn(2+) site.

It belongs to the PP2C family. The cofactor is Mg(2+). Requires Mn(2+) as cofactor.

The catalysed reaction is O-phospho-L-seryl-[protein] + H2O = L-seryl-[protein] + phosphate. The enzyme catalyses O-phospho-L-threonyl-[protein] + H2O = L-threonyl-[protein] + phosphate. The polypeptide is Probable protein phosphatase 2C 74 (Oryza sativa subsp. japonica (Rice)).